The chain runs to 120 residues: Large ribosomal subunit protein uL18 (120 aa).

The protein belongs to the universal ribosomal protein uL18 family. As to quaternary structure, part of the 50S ribosomal subunit; part of the 5S rRNA/L5/L18/L25 subcomplex. Contacts the 5S and 23S rRNAs.

This is one of the proteins that bind and probably mediate the attachment of the 5S RNA into the large ribosomal subunit, where it forms part of the central protuberance. This Rhizobium etli (strain ATCC 51251 / DSM 11541 / JCM 21823 / NBRC 15573 / CFN 42) protein is Large ribosomal subunit protein uL18.